The sequence spans 307 residues: Manganese-dependent inorganic pyrophosphatase (307 aa).

The Mn(2+) site is built by His-7, Asp-11, Asp-13, Asp-66, His-88, and Asp-147.

Mn(2+) serves as cofactor.

It is found in the cytoplasm. It carries out the reaction diphosphate + H2O = 2 phosphate + H(+). This is Manganese-dependent inorganic pyrophosphatase (ppaC) from Methanocaldococcus jannaschii (strain ATCC 43067 / DSM 2661 / JAL-1 / JCM 10045 / NBRC 100440) (Methanococcus jannaschii).